The following is a 61-amino-acid chain: Small ribosomal subunit protein uS14 (61 aa).

Residues Cys-24, Cys-27, Cys-40, and Cys-43 each coordinate Zn(2+).

The protein belongs to the universal ribosomal protein uS14 family. Zinc-binding uS14 subfamily. In terms of assembly, part of the 30S ribosomal subunit. Contacts proteins S3 and S10. It depends on Zn(2+) as a cofactor.

Binds 16S rRNA, required for the assembly of 30S particles and may also be responsible for determining the conformation of the 16S rRNA at the A site. This Bifidobacterium longum (strain DJO10A) protein is Small ribosomal subunit protein uS14.